The sequence spans 312 residues: Acetyl-coenzyme A carboxylase carboxyl transferase subunit alpha (312 aa).

The CoA carboxyltransferase C-terminal domain maps to 36-286; it reads RLDKEVKSIY…KEYFLDALRT (251 aa).

This sequence belongs to the AccA family. Acetyl-CoA carboxylase is a heterohexamer composed of biotin carboxyl carrier protein (AccB), biotin carboxylase (AccC) and two subunits each of ACCase subunit alpha (AccA) and ACCase subunit beta (AccD).

The protein resides in the cytoplasm. It catalyses the reaction N(6)-carboxybiotinyl-L-lysyl-[protein] + acetyl-CoA = N(6)-biotinyl-L-lysyl-[protein] + malonyl-CoA. Its pathway is lipid metabolism; malonyl-CoA biosynthesis; malonyl-CoA from acetyl-CoA: step 1/1. Its function is as follows. Component of the acetyl coenzyme A carboxylase (ACC) complex. First, biotin carboxylase catalyzes the carboxylation of biotin on its carrier protein (BCCP) and then the CO(2) group is transferred by the carboxyltransferase to acetyl-CoA to form malonyl-CoA. This Helicobacter pylori (strain HPAG1) protein is Acetyl-coenzyme A carboxylase carboxyl transferase subunit alpha.